Here is a 167-residue protein sequence, read N- to C-terminus: Interferon gamma (167 aa).

The first 23 residues, Met-1–Cys-23, serve as a signal peptide directing secretion. Gln-24 bears the Pyrrolidone carboxylic acid mark. Asn-41, Asn-108, and Asn-117 each carry an N-linked (GlcNAc...) asparagine glycan.

The protein belongs to the type II (or gamma) interferon family. Homodimer. Interacts with IFNGR1 (via extracellular domain); this interaction promotes IFNGR1 dimerization. As to expression, released primarily from activated T lymphocytes.

The protein resides in the secreted. In terms of biological role, type II interferon produced by immune cells such as T-cells and NK cells that plays crucial roles in antimicrobial, antiviral, and antitumor responses by activating effector immune cells and enhancing antigen presentation. Primarily signals through the JAK-STAT pathway after interaction with its receptor IFNGR1 to affect gene regulation. Upon IFNG binding, IFNGR1 intracellular domain opens out to allow association of downstream signaling components JAK2, JAK1 and STAT1, leading to STAT1 activation, nuclear translocation and transcription of IFNG-regulated genes. Many of the induced genes are transcription factors such as IRF1 that are able to further drive regulation of a next wave of transcription. Plays a role in class I antigen presentation pathway by inducing a replacement of catalytic proteasome subunits with immunoproteasome subunits. In turn, increases the quantity, quality, and repertoire of peptides for class I MHC loading. Increases the efficiency of peptide generation also by inducing the expression of activator PA28 that associates with the proteasome and alters its proteolytic cleavage preference. Up-regulates as well MHC II complexes on the cell surface by promoting expression of several key molecules such as cathepsins B/CTSB, H/CTSH, and L/CTSL. Participates in the regulation of hematopoietic stem cells during development and under homeostatic conditions by affecting their development, quiescence, and differentiation. The sequence is that of Interferon gamma (IFNG) from Oryctolagus cuniculus (Rabbit).